A 226-amino-acid polypeptide reads, in one-letter code: Transmembrane gamma-carboxyglutamic acid protein 4 (226 aa).

An N-terminal signal peptide occupies residues 1 to 17; it reads MFTLLVLLSQLPTVTLG. Positions 18-49 are excised as a propeptide; the sequence is FPHCARGPKASKHAGEEVFTSKEEANFFIHRR. The Extracellular portion of the chain corresponds to 50 to 113; sequence LLYNRFDLEL…KSDGNREKID (64 aa). Residues 52–98 enclose the Gla domain; it reads YNRFDLELFTPGNLERECNEELCNYEEAREIFVDEDKTIAFWQEYSA. Cys-69 and Cys-74 form a disulfide bridge. Glu-72 carries the 4-carboxyglutamate modification. Residues 114–134 form a helical membrane-spanning segment; the sequence is VMGLLTGLIAAGVFLVIFGLL. Over 135–226 the chain is Cytoplasmic; it reads GYYLCITKCN…FKKSMSLPSH (92 aa). Residue Ser-163 is modified to Phosphoserine. The LPXY motif; mediates binding to WW domain-containing proteins motif lies at 186-189; sequence LPSY. The PPXY motif; mediates binding to WW domain-containing proteins signature appears at 204–207; sequence PPPY.

This sequence belongs to the commissureless family. In terms of assembly, interacts (via cytoplasmic domain) with WW domain-containing proteins MAGI1, MAGI3, NEDD4, NEDD4L, WWTR1/TAZ and YAP1. Gamma-carboxyglutamate residues are formed by vitamin K dependent carboxylation. These residues are essential for the binding of calcium. As to expression, widely expressed with highest levels in kidney.

It localises to the endoplasmic reticulum-Golgi intermediate compartment membrane. Its subcellular location is the cell membrane. May control axon guidance across the CNS. Prevents the delivery of ROBO1 at the cell surface and down-regulates its expression. The polypeptide is Transmembrane gamma-carboxyglutamic acid protein 4 (Homo sapiens (Human)).